The chain runs to 121 residues: Two-component response regulator ORR12 (121 aa).

The Response regulatory domain occupies 5 to 121; the sequence is HVLVVDDTLV…VDLPRILNYI (117 aa). D55 bears the 4-aspartylphosphate mark.

It belongs to the ARR family. Type-A subfamily. Two-component system major event consists of a His-to-Asp phosphorelay between a sensor histidine kinase (HK) and a response regulator (RR). In plants, the His-to-Asp phosphorelay involves an additional intermediate named Histidine-containing phosphotransfer protein (HPt). This multistep phosphorelay consists of a His-Asp-His-Asp sequential transfer of a phosphate group between first a His and an Asp of the HK protein, followed by the transfer to a conserved His of the HPt protein and finally the transfer to an Asp in the receiver domain of the RR protein. As to expression, expressed in flowers and panicles.

Functionally, functions as a response regulator involved in His-to-Asp phosphorelay signal transduction system. Phosphorylation of the Asp residue in the receiver domain activates the ability of the protein to promote the transcription of target genes. Type-A response regulators seem to act as negative regulators of the cytokinin signaling. In Oryza sativa subsp. japonica (Rice), this protein is Two-component response regulator ORR12.